The following is a 329-amino-acid chain: 4-hydroxy-3-methylbut-2-enyl diphosphate reductase 1 (329 aa).

C29 contacts [4Fe-4S] cluster. (2E)-4-hydroxy-3-methylbut-2-enyl diphosphate-binding residues include H58 and H95. Dimethylallyl diphosphate is bound by residues H58 and H95. 2 residues coordinate isopentenyl diphosphate: H58 and H95. C117 is a [4Fe-4S] cluster binding site. A (2E)-4-hydroxy-3-methylbut-2-enyl diphosphate-binding site is contributed by H145. H145 contributes to the dimethylallyl diphosphate binding site. H145 is an isopentenyl diphosphate binding site. E147 acts as the Proton donor in catalysis. Residue T185 participates in (2E)-4-hydroxy-3-methylbut-2-enyl diphosphate binding. C215 serves as a coordination point for [4Fe-4S] cluster. S243, S244, N245, and S287 together coordinate (2E)-4-hydroxy-3-methylbut-2-enyl diphosphate. Dimethylallyl diphosphate contacts are provided by S243, S244, N245, and S287. Residues S243, S244, N245, and S287 each contribute to the isopentenyl diphosphate site.

It belongs to the IspH family. [4Fe-4S] cluster is required as a cofactor.

It carries out the reaction isopentenyl diphosphate + 2 oxidized [2Fe-2S]-[ferredoxin] + H2O = (2E)-4-hydroxy-3-methylbut-2-enyl diphosphate + 2 reduced [2Fe-2S]-[ferredoxin] + 2 H(+). It catalyses the reaction dimethylallyl diphosphate + 2 oxidized [2Fe-2S]-[ferredoxin] + H2O = (2E)-4-hydroxy-3-methylbut-2-enyl diphosphate + 2 reduced [2Fe-2S]-[ferredoxin] + 2 H(+). The protein operates within isoprenoid biosynthesis; dimethylallyl diphosphate biosynthesis; dimethylallyl diphosphate from (2E)-4-hydroxy-3-methylbutenyl diphosphate: step 1/1. Its pathway is isoprenoid biosynthesis; isopentenyl diphosphate biosynthesis via DXP pathway; isopentenyl diphosphate from 1-deoxy-D-xylulose 5-phosphate: step 6/6. Its function is as follows. Catalyzes the conversion of 1-hydroxy-2-methyl-2-(E)-butenyl 4-diphosphate (HMBPP) into a mixture of isopentenyl diphosphate (IPP) and dimethylallyl diphosphate (DMAPP). Acts in the terminal step of the DOXP/MEP pathway for isoprenoid precursor biosynthesis. The polypeptide is 4-hydroxy-3-methylbut-2-enyl diphosphate reductase 1 (Mycobacterium tuberculosis (strain CDC 1551 / Oshkosh)).